The primary structure comprises 635 residues: Threonine--tRNA ligase (635 aa).

Residues 1 to 152 form an editing domain region; that stretch reads MQLLLIHSDY…AKAAVKPEAA (152 aa). Residues 215–514 are catalytic; it reads PHVELMRRLE…TEEGKVPMLP (300 aa). Residues cysteine 307, histidine 359, and histidine 483 each coordinate Zn(2+).

Belongs to the class-II aminoacyl-tRNA synthetase family. In terms of assembly, homodimer. The cofactor is Zn(2+).

The protein localises to the cytoplasm. The catalysed reaction is tRNA(Thr) + L-threonine + ATP = L-threonyl-tRNA(Thr) + AMP + diphosphate + H(+). Functionally, catalyzes the attachment of threonine to tRNA(Thr) in a two-step reaction: L-threonine is first activated by ATP to form Thr-AMP and then transferred to the acceptor end of tRNA(Thr). Also edits incorrectly charged L-seryl-tRNA(Thr). The chain is Threonine--tRNA ligase from Methanosarcina acetivorans (strain ATCC 35395 / DSM 2834 / JCM 12185 / C2A).